The primary structure comprises 296 residues: mRNA 3'-end-processing protein RNA15 (296 aa).

Positions 18-96 constitute an RRM domain; it reads RVVYLGSIPY…RFLKCGYSSN (79 aa). Positions 99–140 are disordered; it reads ISGVSQQQQQQYNNINGNNNNNGNNNNNSNGPDFQNSGNANF. The span at 100–135 shows a compositional bias: low complexity; sequence SGVSQQQQQQYNNINGNNNNNGNNNNNSNGPDFQNS.

As to quaternary structure, component of the CFIA complex, which is composed of RNA14, RNA15, PCF11 and CLP1. Interacts directly with RNA14. Interacts with polyadenylate-binding protein PAB1.

It is found in the nucleus. Its function is as follows. RNA-binding component of the cleavage factor IA (CFIA) complex, which is involved in the endonucleolytic cleavage during polyadenylation-dependent pre-mRNA 3'-end formation and cooperates with the cleavage factor NAB4/CFIB and the cleavage and polyadenylation factor (CPF) complex. Binds to A-rich RNA sequence elements. The polypeptide is mRNA 3'-end-processing protein RNA15 (RNA15) (Saccharomyces cerevisiae (strain ATCC 204508 / S288c) (Baker's yeast)).